The chain runs to 186 residues: Putative transcriptional regulator encoded by LINC00473 (186 aa).

Residues 1 to 62 form a disordered region; sequence MELSAAAGRR…RDCTPTCTNA (62 aa). The span at 18-40 shows a compositional bias: basic and acidic residues; that stretch reads FTGRHRTERSQERGSTPRKERSM.

Its function is as follows. May play a role in cAMP-mediated gene transcription. This is Putative transcriptional regulator encoded by LINC00473 (LINC00473) from Homo sapiens (Human).